Here is a 1653-residue protein sequence, read N- to C-terminus: Cortactin-binding protein 2 (1653 aa).

Disordered stretches follow at residues 1 to 27 (MATD…AEAA), 203 to 222 (KKKT…RSTE), 268 to 297 (QLKR…SVGT), 314 to 339 (ESTE…KGSV), and 356 to 609 (HGDL…PSID). The stretch at 119-276 (RKMQERMSTQ…EQLKRGSDSK (158 aa)) forms a coiled coil. Positions 379-389 (GPSTGSPPDLT) are enriched in polar residues. The segment covering 390 to 408 (SSAAQSPAAAPHGLPPAHG) has biased composition (low complexity). 3 stretches are compositionally biased toward polar residues: residues 444–470 (GNAN…TSRD), 478–490 (ARNT…SRFT), and 573–584 (TVASSPPSSLPQ). The residue at position 488 (arginine 488) is an Asymmetric dimethylarginine. ANK repeat units lie at residues 700–730 (GRPT…DINY), 734–763 (DGHS…QVNA), 767–796 (NGFT…HINH), 800–829 (GGQT…DRSV), and 833–862 (DGWT…PAHG). The tract at residues 860–892 (AHGNSLNEEEPESDASDLDEGEESSEGKSKPVV) is disordered. Acidic residues predominate over residues 866-883 (NEEEPESDASDLDEGEES). The stretch at 903–933 (EGWTAAHIAASKGFKNCLEILCRHRGLEPER) is one ANK 6 repeat. The interval 1441 to 1472 (ESGAWRKVNTSPRRKSGRFSSPTWNKPDLSNE) is disordered. Serine 1514 is subject to Phosphoserine. Residues 1545 to 1653 (DLRTFDSSGN…KNEHIEKLNK (109 aa)) are disordered. 2 stretches are compositionally biased toward polar residues: residues 1549–1564 (FDSS…TANN) and 1572–1589 (KEVS…SNNK). Residues 1614–1628 (SQNTKRSSSSSNTRQ) show a composition bias toward low complexity. Residues 1635-1653 (SKEENWNLHKNEHIEKLNK) are compositionally biased toward basic and acidic residues.

Interacts with CTTN/cortactin SH3 domain. Interacts with STRN, STRN4/zinedin and MOB4/phocein; this interactions mediate the association with the STRIPAK core complex and may regulate dendritic spine distribution of the STRIPAK complex in hippocampal neurons. Activation of glutamate receptors weakens the interaction with STRN and STRN4.

Its subcellular location is the cytoplasm. It localises to the cell cortex. The protein resides in the cell projection. It is found in the dendritic spine. Functionally, regulates the dendritic spine distribution of CTTN/cortactin in hippocampal neurons, and thus controls dendritic spinogenesis and dendritic spine maintenance. Associates with the striatin-interacting phosphatase and kinase (STRIPAK) core complex to regulate dendritic spine distribution of the STRIPAK complex in hippocampal neurons. In Eulemur macaco macaco (Black lemur), this protein is Cortactin-binding protein 2 (CTTNBP2).